The following is a 462-amino-acid chain: MAVSLWQQCIGRLQDELSAQQFSMWIRPLQAEMDGDTLVLYAPNRFVLDWVRDKYINIINQFFTEQMGSDAPKLRFDIGSRPSAKKPSVPAPIAPTRVANTQTKATVGTTFNVQAEPMANANHRSNINPSYQFDNFVEGKSNQLGKAAALQVAENPGGAYNPLFLYGGTGLGKTHLLHAVGNGIIKNNPNAKVVYMHSERFVQDMVKALQNNAIEEFKRYYRSVDALFIDDIQFFANKDRSQEEFFHTFNALLEGNHQIILTSDRYPKEIDGVEDRLKSRFGWGLTVAIEPPELETRVAILMRKAQESGINLPDEVAFFIAKRLRSNVRELEGALNRVIANANFTGRPITIDFVREALRDLLALQEKLVTIDNIQKTVAEYYKIKMADMLSKRRSRSVARPRQVAMALSKELTNQSLPEIGDAFGGRDHTTVLHACRKIAQLREESHDIKEDYANLIRTLSS.

The domain I, interacts with DnaA modulators stretch occupies residues 1–84; sequence MAVSLWQQCI…RFDIGSRPSA (84 aa). Residues 84 to 125 form a domain II region; it reads AKKPSVPAPIAPTRVANTQTKATVGTTFNVQAEPMANANHRS. The domain III, AAA+ region stretch occupies residues 126-342; it reads NINPSYQFDN…GALNRVIANA (217 aa). Residues G170, G172, K173, and T174 each contribute to the ATP site. Residues 343-462 are domain IV, binds dsDNA; sequence NFTGRPITID…YANLIRTLSS (120 aa).

This sequence belongs to the DnaA family. As to quaternary structure, oligomerizes as a right-handed, spiral filament on DNA at oriC.

The protein localises to the cytoplasm. Plays an essential role in the initiation and regulation of chromosomal replication. ATP-DnaA binds to the origin of replication (oriC) to initiate formation of the DNA replication initiation complex once per cell cycle. Binds the DnaA box (a 9 base pair repeat at the origin) and separates the double-stranded (ds)DNA. Forms a right-handed helical filament on oriC DNA; dsDNA binds to the exterior of the filament while single-stranded (ss)DNA is stabiized in the filament's interior. The ATP-DnaA-oriC complex binds and stabilizes one strand of the AT-rich DNA unwinding element (DUE), permitting loading of DNA polymerase. After initiation quickly degrades to an ADP-DnaA complex that is not apt for DNA replication. Binds acidic phospholipids. In Shewanella baltica (strain OS195), this protein is Chromosomal replication initiator protein DnaA.